Consider the following 293-residue polypeptide: Formamidopyrimidine-DNA glycosylase (293 aa).

Pro2 serves as the catalytic Schiff-base intermediate with DNA. Glu3 functions as the Proton donor in the catalytic mechanism. The active-site Proton donor; for beta-elimination activity is the Lys58. The DNA site is built by His104, Arg127, and Arg170. The FPG-type zinc finger occupies 257-293 (SVYGREGKPCRNPACGGTVERVVQSGRSTFFCASCQT). The active-site Proton donor; for delta-elimination activity is the Arg283.

It belongs to the FPG family. In terms of assembly, monomer. Zn(2+) serves as cofactor.

The catalysed reaction is Hydrolysis of DNA containing ring-opened 7-methylguanine residues, releasing 2,6-diamino-4-hydroxy-5-(N-methyl)formamidopyrimidine.. It catalyses the reaction 2'-deoxyribonucleotide-(2'-deoxyribose 5'-phosphate)-2'-deoxyribonucleotide-DNA = a 3'-end 2'-deoxyribonucleotide-(2,3-dehydro-2,3-deoxyribose 5'-phosphate)-DNA + a 5'-end 5'-phospho-2'-deoxyribonucleoside-DNA + H(+). Involved in base excision repair of DNA damaged by oxidation or by mutagenic agents. Acts as a DNA glycosylase that recognizes and removes damaged bases. Has a preference for oxidized purines, such as 7,8-dihydro-8-oxoguanine (8-oxoG). Has AP (apurinic/apyrimidinic) lyase activity and introduces nicks in the DNA strand. Cleaves the DNA backbone by beta-delta elimination to generate a single-strand break at the site of the removed base with both 3'- and 5'-phosphates. This is Formamidopyrimidine-DNA glycosylase from Brucella melitensis biotype 1 (strain ATCC 23456 / CCUG 17765 / NCTC 10094 / 16M).